A 585-amino-acid chain; its full sequence is Arginine--tRNA ligase (585 aa).

Residues 126–136 (PNIAKEMHVGH) carry the 'HIGH' region motif.

This sequence belongs to the class-I aminoacyl-tRNA synthetase family. Monomer.

It localises to the cytoplasm. The enzyme catalyses tRNA(Arg) + L-arginine + ATP = L-arginyl-tRNA(Arg) + AMP + diphosphate. In Cyanothece sp. (strain PCC 7425 / ATCC 29141), this protein is Arginine--tRNA ligase.